Reading from the N-terminus, the 273-residue chain is Ribosomal RNA small subunit methyltransferase A (273 aa).

Residues Asn18, Leu20, Gly45, Glu66, Asp91, and Asn113 each contribute to the S-adenosyl-L-methionine site.

Belongs to the class I-like SAM-binding methyltransferase superfamily. rRNA adenine N(6)-methyltransferase family. RsmA subfamily.

It localises to the cytoplasm. The enzyme catalyses adenosine(1518)/adenosine(1519) in 16S rRNA + 4 S-adenosyl-L-methionine = N(6)-dimethyladenosine(1518)/N(6)-dimethyladenosine(1519) in 16S rRNA + 4 S-adenosyl-L-homocysteine + 4 H(+). In terms of biological role, specifically dimethylates two adjacent adenosines (A1518 and A1519) in the loop of a conserved hairpin near the 3'-end of 16S rRNA in the 30S particle. May play a critical role in biogenesis of 30S subunits. The sequence is that of Ribosomal RNA small subunit methyltransferase A from Escherichia coli O1:K1 / APEC.